Here is a 1185-residue protein sequence, read N- to C-terminus: Chromosome partition protein Smc (1185 aa).

P32–N39 is an ATP binding site. A coiled-coil region spans residues S228–N503. The disordered stretch occupies residues T300–A323. Over residues D307–R320 the composition is skewed to basic and acidic residues. The SMC hinge domain maps to S519 to I637. Coiled coils occupy residues Q675–E928 and A989–D1025.

The protein belongs to the SMC family. Homodimer.

It localises to the cytoplasm. In terms of biological role, required for chromosome condensation and partitioning. In Lactiplantibacillus plantarum (strain ATCC BAA-793 / NCIMB 8826 / WCFS1) (Lactobacillus plantarum), this protein is Chromosome partition protein Smc.